A 302-amino-acid polypeptide reads, in one-letter code: Forkhead box protein R2 (302 aa).

The segment at residues 183 to 285 (RPPLNYSHLV…RVLAYARRES (103 aa)) is a DNA-binding region (fork-head).

It localises to the nucleus. This chain is Forkhead box protein R2 (Foxr2), found in Mus musculus (Mouse).